The chain runs to 182 residues: P21 prophage-derived terminase small subunit (182 aa).

31–36 serves as a coordination point for ATP; sequence SKGSKG.

Belongs to the terminase small subunit family. In terms of assembly, heterooligomer of gp1 and gp2.

Its function is as follows. Involved in the initiation of the phage DNA packaging into the prohead. Processes replicating concatemeric DNA into pieces of unit length with cohesive ends. This is P21 prophage-derived terminase small subunit (nohA) from Escherichia coli O6:H1 (strain CFT073 / ATCC 700928 / UPEC).